The primary structure comprises 242 residues: Probable inactive serine protease 58 (242 aa).

The N-terminal stretch at 1 to 17 is a signal peptide; that stretch reads MNLILLWALLNLPVALT. The region spanning 18–240 is the Peptidase S1 domain; it reads FDPNYKDDIT…YIPWIENTIQ (223 aa). Intrachain disulfides connect C41–C57, C134–C202, C166–C181, and C192–C216. N-linked (GlcNAc...) asparagine glycosylation is present at N157.

It belongs to the peptidase S1 family.

It localises to the secreted. This is Probable inactive serine protease 58 (PRSS58) from Bos taurus (Bovine).